Here is a 43-residue protein sequence, read N- to C-terminus: Large ribosomal subunit protein uL11 (43 aa).

This sequence belongs to the universal ribosomal protein uL11 family. As to quaternary structure, part of the ribosomal stalk of the 50S ribosomal subunit. Interacts with L10 and the large rRNA to form the base of the stalk. L10 forms an elongated spine to which L12 dimers bind in a sequential fashion forming a multimeric L10(L12)X complex. Post-translationally, one or more lysine residues are methylated.

In terms of biological role, forms part of the ribosomal stalk which helps the ribosome interact with GTP-bound translation factors. In Streptomyces galbus, this protein is Large ribosomal subunit protein uL11 (rplK).